The following is a 911-amino-acid chain: Leucine--tRNA ligase (911 aa).

Residues 42–52 (PYPSGKLHMGH) carry the 'HIGH' region motif. The 'KMSKS' region signature appears at 659-663 (TMSKS). An ATP-binding site is contributed by K662.

This sequence belongs to the class-I aminoacyl-tRNA synthetase family.

The protein localises to the cytoplasm. It carries out the reaction tRNA(Leu) + L-leucine + ATP = L-leucyl-tRNA(Leu) + AMP + diphosphate. In Delftia acidovorans (strain DSM 14801 / SPH-1), this protein is Leucine--tRNA ligase.